The chain runs to 457 residues: Multidrug resistance protein MdtK (457 aa).

The next 12 membrane-spanning stretches (helical) occupy residues L11 to V31, A46 to L66, W93 to I113, A127 to L147, G160 to Y180, L188 to M208, L243 to V263, L283 to F301, Y316 to F336, L357 to V377, I387 to G407, and P418 to L438.

This sequence belongs to the multi antimicrobial extrusion (MATE) (TC 2.A.66.1) family. MdtK subfamily.

The protein localises to the cell inner membrane. Its function is as follows. Multidrug efflux pump that functions probably as a Na(+)/drug antiporter. The polypeptide is Multidrug resistance protein MdtK (Yersinia pseudotuberculosis serotype O:1b (strain IP 31758)).